Here is a 400-residue protein sequence, read N- to C-terminus: MEDLLKRVLKCEALQQPQWSEPSQLHDAQAYLRDSASLIRVEDILVLRATLARVAAGEAMIIQCGDCAEDMDESAADHVTRKAALLDMLAGTFRLVTQQPVVRVGRIAGQFAKPRSNHSERIGDVELPVYRGDMVNGRDAVLGHRQHDAQRLVRGYRAAQDIMQHLGWKEPSGQEQLTGSPAWTSHEMLVLDYELPQVRRDEQGRTFLGSTHWPWIGERTRQLTGAHVALLSEVLNPVACKVGPDITQDQLLSLCERLDPRREPGRLTLIARMGAHKVADRLPPLVEAVRRAGHKIIWLSDPMHGNTIVAPCGNKTRMVQTITDEITAFKHAVVSAGGVAGGLHLETTPDDVSECASDAAGLGQVGSHYKSLCDPRLNPWQAITAVMAWKACPPPSFVSL.

This sequence belongs to the class-II DAHP synthase family.

It carries out the reaction D-erythrose 4-phosphate + phosphoenolpyruvate + H2O = 7-phospho-2-dehydro-3-deoxy-D-arabino-heptonate + phosphate. It functions in the pathway antibiotic biosynthesis; phenazine biosynthesis. This is Probable phospho-2-dehydro-3-deoxyheptonate aldolase (phzC) from Pseudomonas fluorescens.